The primary structure comprises 417 residues: C6 finger transcription factor traC (417 aa).

The tract at residues 1–40 is disordered; the sequence is MNFSEQFTGRSEPGRKANRTSNNNTNSTTNVATVTTDDSN. Over residues 19-37 the composition is skewed to low complexity; the sequence is RTSNNNTNSTTNVATVTTD. Residues 44-73 constitute a DNA-binding region (zn(2)-C6 fungal-type); sequence CDRCKGQKLRCIWENGSNTCRRCTRARAVC. Disordered regions lie at residues 75–94 and 104–128; these read QPRPRPFGRPRCSTKSKHHV and WVSSTTQQPQENDAEMPMATSDDHD. The span at 80–94 shows a compositional bias: basic residues; it reads PFGRPRCSTKSKHHV. Residues 104-114 show a composition bias toward polar residues; the sequence is WVSSTTQQPQE.

The protein resides in the nucleus. Its function is as follows. C6 finger transcription factor; part of the tra gene cluster that produces terrestric acid. The clavatol biosynthesis cluster cla and the terrestric acid cluster tra are both involved in the production of peniphenones and penilactones. The polypeptide is C6 finger transcription factor traC (Penicillium crustosum (Blue mold fungus)).